Reading from the N-terminus, the 136-residue chain is Small ribosomal subunit protein uS8c (136 aa).

The protein belongs to the universal ribosomal protein uS8 family. As to quaternary structure, part of the 30S ribosomal subunit.

It localises to the plastid. The protein resides in the chloroplast. Its function is as follows. One of the primary rRNA binding proteins, it binds directly to 16S rRNA central domain where it helps coordinate assembly of the platform of the 30S subunit. The sequence is that of Small ribosomal subunit protein uS8c (rps8) from Saccharum officinarum (Sugarcane).